The following is an 86-amino-acid chain: ATP synthase subunit c (86 aa).

Transmembrane regions (helical) follow at residues 8–28 (VLGC…GPGI) and 64–84 (TTGL…PLLG).

This sequence belongs to the ATPase C chain family. In terms of assembly, F-type ATPases have 2 components, F(1) - the catalytic core - and F(0) - the membrane proton channel. F(1) has five subunits: alpha(3), beta(3), gamma(1), delta(1), epsilon(1). F(0) has three main subunits: a(1), b(2) and c(10-14). The alpha and beta chains form an alternating ring which encloses part of the gamma chain. F(1) is attached to F(0) by a central stalk formed by the gamma and epsilon chains, while a peripheral stalk is formed by the delta and b chains.

The protein localises to the cell membrane. F(1)F(0) ATP synthase produces ATP from ADP in the presence of a proton or sodium gradient. F-type ATPases consist of two structural domains, F(1) containing the extramembraneous catalytic core and F(0) containing the membrane proton channel, linked together by a central stalk and a peripheral stalk. During catalysis, ATP synthesis in the catalytic domain of F(1) is coupled via a rotary mechanism of the central stalk subunits to proton translocation. Its function is as follows. Key component of the F(0) channel; it plays a direct role in translocation across the membrane. A homomeric c-ring of between 10-14 subunits forms the central stalk rotor element with the F(1) delta and epsilon subunits. This is ATP synthase subunit c from Lachnoclostridium phytofermentans (strain ATCC 700394 / DSM 18823 / ISDg) (Clostridium phytofermentans).